Reading from the N-terminus, the 389-residue chain is 2-deoxystreptamine N-acetyl-D-glucosaminyltransferase (389 aa).

It belongs to the glycosyltransferase group 1 family.

The enzyme catalyses 2-deoxystreptamine + UDP-N-acetyl-alpha-D-glucosamine = 2'-N-acetylparomamine + UDP + H(+). The protein operates within antibiotic biosynthesis; butirosin biosynthesis. In terms of biological role, glycosyltransferase involved in the biosynthesis of butirosin by mediating conversion of 2-deoxystreptamine (2-DOS) to 2'-N-acetylparomamine using UDP-alpha-D-glucosamine as sugar donor. The polypeptide is 2-deoxystreptamine N-acetyl-D-glucosaminyltransferase (btrM) (Niallia circulans (Bacillus circulans)).